The primary structure comprises 483 residues: MLTLDTLNVMLAVSEEGLIEEMIIALLASPQLAVFFEKFPRLKAAITDDVPRWREALRRRLKDARVPPELTEEVMCYQQSQLLSTPQFIVQLPQILDLLHRLNSPWAEQACQLVDANSTITSALHTLFLQRWRLSLIVQATTLNQQLLEEEREQLLSEVQERMTLSGQLEPILADNNTAAGRLWDMSAGQLKRGDYQLIVKYGEFLNEQPELKRLAEQLGRSREAKSIPRNDAQMETFRTMVREPATVPEQVDGLQQSDDILRLLPPELATLGITELEYEFYRRLVEKQLLTYRLHGESWREKVIERPVVHKDYDEQPRGPFIVCVDTSGSMGGFNEQCAKAFCLALMRIALAENRRCYIMLFSTEIVRYELSGPQGIEQAIRFLSQQFRGGTDLASCFRAIMERLQSREWFDADAVVISDFIAQRLPDDVTSKVKELQRVHQHRFHAVAMSAHGKPGIMRIFDHIWRFDTGMRSRLLRRWRR.

The protein belongs to the ViaA family. Homodimer. Interacts with RavA.

Its subcellular location is the cytoplasm. In terms of biological role, component of the RavA-ViaA chaperone complex, which may act on the membrane to optimize the function of some of the respiratory chains. ViaA stimulates the ATPase activity of RavA. The chain is Regulatory protein ViaA from Escherichia coli O127:H6 (strain E2348/69 / EPEC).